The chain runs to 501 residues: Probable malate:quinone oxidoreductase (501 aa).

The protein belongs to the MQO family. Requires FAD as cofactor.

The catalysed reaction is (S)-malate + a quinone = a quinol + oxaloacetate. It functions in the pathway carbohydrate metabolism; tricarboxylic acid cycle; oxaloacetate from (S)-malate (quinone route): step 1/1. In Mycolicibacterium paratuberculosis (strain ATCC BAA-968 / K-10) (Mycobacterium paratuberculosis), this protein is Probable malate:quinone oxidoreductase.